Consider the following 298-residue polypeptide: Calcium-binding protein 1 (298 aa).

Basic and acidic residues predominate over residues 1-10 (MSSHIAKSES). Positions 1 to 131 (MSSHIAKSES…APAGTPEADP (131 aa)) are disordered. Ser-2 carries N-myristoyl glycine lipidation. His-4 carries the S-palmitoyl cysteine lipid modification. Over residues 11–25 (KTSLLKAAAASGGSR) the composition is skewed to low complexity. EF-hand domains follow at residues 153–188 (EEIE…MGYM), 207–224 (GHVD…KLLA), 230–265 (IGVK…LLGH), and 267–298 (VGHR…MMSR). Ca(2+) contacts are provided by Asp-166, Asp-168, Asp-170, Tyr-172, and Asp-177. Ca(2+) is bound by residues Asp-243, Asn-245, Asp-247, and Glu-249. Ser-251 is modified (phosphoserine). Ca(2+) is bound by residues Glu-254, Asp-280, Asn-282, Asp-284, Arg-286, and Glu-291.

As to quaternary structure, interacts with ITPR1, ITPR2 and ITPR3. The strength of this interaction inversely correlates with calcium concentration. Interacts with CACNA1A (via C-terminal CDB motif) in the pre- and postsynaptic membranes. Interacts with CACNA1C. Interacts with CACNA1D. Interacts (via EF-hands 1 and 2) at microtubules with MAP1LC3B. Interacts (via EF-hands 1 and 2) with NSMF (via the central NLS-containing motif region), the interaction occurs in a calcium dependent manner after synaptic NMDA receptor stimulation and prevents nuclear import of NSMF. Interacts with MYO1C and TRPC5. Interacts with SPACA9. In terms of processing, phosphorylated. The phosphorylation regulates the activity. In terms of tissue distribution, somatodendritic compartment of neurons. Restricted expression in retina to a subpopulation of amacrine, bipolar, and ganglion cells. According to PubMed:11906216, expression is heterogeneous within brain regions and their major cell types and does not match with those of marker proteins for characterized neuronal subpopulations. Isoform 2: Minor isoform expressed in the brain, in the granule cell layer of the cerebellum, at low level. Not developmentally regulated. Isoform 3: Minor isoform expressed in the brain, in the granule cell layer. of the cerebellum, at low level. Not developmentally regulated.

It localises to the cytoplasm. It is found in the cytoskeleton. In terms of biological role, modulates calcium-dependent activity of inositol 1,4,5-triphosphate receptors (ITPRs). Inhibits agonist-induced intracellular calcium signaling. Enhances inactivation and does not support calcium-dependent facilitation of voltage-dependent P/Q-type calcium channels. Causes calcium-dependent facilitation and inhibits inactivation of L-type calcium channels by binding to the same sites as calmodulin in the C-terminal domain of CACNA1C, but has an opposite effect on channel function. Suppresses the calcium-dependent inactivation of CACNA1D. Inhibits TRPC5 channels. Prevents NMDA receptor-induced cellular degeneration. Required for the normal transfer of light signals through the retina. In Rattus norvegicus (Rat), this protein is Calcium-binding protein 1 (Cabp1).